The sequence spans 198 residues: RxLR effector protein CRE4 (198 aa).

Residues 1–20 form the signal peptide; sequence MLRSFLLIVATVSLFGQCKP. Residues 43 to 52 carry the RxLR-dEER motif; it reads RFVRTNDEER.

It belongs to the RxLR effector family.

It localises to the secreted. It is found in the host cytoplasm. The protein resides in the host nucleus. Its subcellular location is the host nucleolus. In terms of biological role, effector that is involved in host plant infection. Contributes to virulence during the early infection stage, by inhibiting plant defense responses induced by both PAMP-triggered immunity (PTI) and effector-triggered immunity (ETI). The polypeptide is RxLR effector protein CRE4 (CRE4) (Phytophthora infestans (strain T30-4) (Potato late blight agent)).